A 313-amino-acid chain; its full sequence is Ribosomal RNA small subunit methyltransferase H (313 aa).

Residues Gly48–His50, Asp68, Phe102, Asp120, and Gln127 each bind S-adenosyl-L-methionine. A disordered region spans residues Thr290 to Lys313. The span at Arg301–Lys313 shows a compositional bias: basic residues.

The protein belongs to the methyltransferase superfamily. RsmH family.

Its subcellular location is the cytoplasm. The catalysed reaction is cytidine(1402) in 16S rRNA + S-adenosyl-L-methionine = N(4)-methylcytidine(1402) in 16S rRNA + S-adenosyl-L-homocysteine + H(+). Specifically methylates the N4 position of cytidine in position 1402 (C1402) of 16S rRNA. The chain is Ribosomal RNA small subunit methyltransferase H from Koribacter versatilis (strain Ellin345).